The sequence spans 39 residues: CISARYPCSNSKDCCSGSCGIFWTCYLRKDPCSKECLAP.

Intrachain disulfides connect cysteine 1–cysteine 15, cysteine 8–cysteine 19, cysteine 14–cysteine 36, and cysteine 25–cysteine 32.

As to expression, expressed by the venom gland.

It localises to the secreted. Functionally, causes paralysis to insect larvae (H.virescens). This toxin is active only on insects. This chain is U1-nemetoxin-Csp1c, found in Calisoga sp. (Spider).